The sequence spans 158 residues: NADH-quinone oxidoreductase subunit B (158 aa).

4 residues coordinate [4Fe-4S] cluster: C37, C38, C102, and C132.

It belongs to the complex I 20 kDa subunit family. As to quaternary structure, NDH-1 is composed of 14 different subunits. Subunits NuoB, C, D, E, F, and G constitute the peripheral sector of the complex. It depends on [4Fe-4S] cluster as a cofactor.

Its subcellular location is the cell inner membrane. The enzyme catalyses a quinone + NADH + 5 H(+)(in) = a quinol + NAD(+) + 4 H(+)(out). Functionally, NDH-1 shuttles electrons from NADH, via FMN and iron-sulfur (Fe-S) centers, to quinones in the respiratory chain. Couples the redox reaction to proton translocation (for every two electrons transferred, four hydrogen ions are translocated across the cytoplasmic membrane), and thus conserves the redox energy in a proton gradient. This Bordetella petrii (strain ATCC BAA-461 / DSM 12804 / CCUG 43448) protein is NADH-quinone oxidoreductase subunit B.